A 229-amino-acid chain; its full sequence is Uracil-DNA glycosylase (229 aa).

Catalysis depends on Asp67, which acts as the Proton acceptor.

Belongs to the uracil-DNA glycosylase (UDG) superfamily. UNG family.

It localises to the cytoplasm. The catalysed reaction is Hydrolyzes single-stranded DNA or mismatched double-stranded DNA and polynucleotides, releasing free uracil.. Functionally, excises uracil residues from the DNA which can arise as a result of misincorporation of dUMP residues by DNA polymerase or due to deamination of cytosine. This Coxiella burnetii (strain RSA 493 / Nine Mile phase I) protein is Uracil-DNA glycosylase.